Reading from the N-terminus, the 177-residue chain is Shikimate kinase (177 aa).

14 to 19 is a binding site for ATP; sequence GSGKST. Serine 18 provides a ligand contact to Mg(2+). The substrate site is built by aspartate 36, arginine 60, and glycine 82. Arginine 120 contributes to the ATP binding site. Residue arginine 139 coordinates substrate.

The protein belongs to the shikimate kinase family. As to quaternary structure, monomer. Mg(2+) serves as cofactor.

It is found in the cytoplasm. It catalyses the reaction shikimate + ATP = 3-phosphoshikimate + ADP + H(+). Its pathway is metabolic intermediate biosynthesis; chorismate biosynthesis; chorismate from D-erythrose 4-phosphate and phosphoenolpyruvate: step 5/7. Its function is as follows. Catalyzes the specific phosphorylation of the 3-hydroxyl group of shikimic acid using ATP as a cosubstrate. The polypeptide is Shikimate kinase (Gloeobacter violaceus (strain ATCC 29082 / PCC 7421)).